Reading from the N-terminus, the 138-residue chain is Small ribosomal subunit protein uS8 (138 aa).

It belongs to the universal ribosomal protein uS8 family. As to quaternary structure, part of the 30S ribosomal subunit. Contacts proteins S5 and S12.

One of the primary rRNA binding proteins, it binds directly to 16S rRNA central domain where it helps coordinate assembly of the platform of the 30S subunit. The polypeptide is Small ribosomal subunit protein uS8 (Thermus aquaticus).